A 522-amino-acid chain; its full sequence is Aspartic and glutamic acid-rich protein (522 aa).

Positions 1-16 are cleaved as a signal peptide; it reads MKVFVYLLVTFSLTNA. 2 stretches are compositionally biased toward basic and acidic residues: residues 72–81 and 93–102; these read YDDFFPKDTS and SRNDDGYDLA. The disordered stretch occupies residues 72–497; that stretch reads YDDFFPKDTS…KSKDAAQGNI (426 aa). The span at 109–125 shows a compositional bias: acidic residues; that stretch reads DDEEAYDDFDEVDDRAD. Basic and acidic residues predominate over residues 142-152; the sequence is KLPAEEESKND. Acidic residues-rich tracts occupy residues 153–166, 173–200, 228–261, and 267–283; these read MDEE…EEDK, FAED…EDEV, DNEE…DESD, and EVED…TEEG. Basic and acidic residues predominate over residues 284–343; that stretch reads SEIKQNDETEEQPEKKFDADKEHEDAPEPLKEKLSDESKARAEDESDKSEDAAKEIKEPE. Residues 319–465 adopt a coiled-coil conformation; sequence DESKARAEDE…KSNLALKRDE (147 aa). Acidic residues predominate over residues 358–374; it reads DEAELLDDEAELSDDEA. 3 stretches are compositionally biased toward basic and acidic residues: residues 375-397, 407-453, and 461-491; these read ELSK…KAEK, DEAK…EFAK, and LKRD…KSKD.

In terms of tissue distribution, component of the acid-soluble organic matrix of the aragonitic skeleton (at protein level).

The protein localises to the secreted. The sequence is that of Aspartic and glutamic acid-rich protein from Acropora millepora (Staghorn coral).